A 1553-amino-acid polypeptide reads, in one-letter code: DNA topoisomerase 2-alpha (1553 aa).

The disordered stretch occupies residues 1–25 (MELLDSPAPLRPLHDNPRLPKADGA). The span at 12-25 (PLHDNPRLPKADGA) shows a compositional bias: basic and acidic residues. Residues N92, N121, 149 to 151 (SSN), and 162 to 169 (GRNGYGAK) contribute to the ATP site. Residues 343 to 345 (KKK) are interaction with DNA. Residue 377 to 379 (QTK) participates in ATP binding. Residues 456 to 573 (CTLILTEGDS…SLLRHNFLEE (118 aa)) form the Toprim domain. The Mg(2+) site is built by E462, D542, and D544. One can recognise a Topo IIA-type catalytic domain in the interval 716 to 1163 (IPSLVDGLKP…SPSDLWKEDL (448 aa)). The active-site O-(5'-phospho-DNA)-tyrosine intermediate is the Y806. Residues 991–1000 (KLQTNLTCNS) are interaction with DNA. Disordered stretches follow at residues 1095–1114 (QNKEEEEGDESGEESAAATG) and 1186–1553 (TGKP…DDMF). The segment covering 1098–1107 (EEEEGDESGE) has biased composition (acidic residues). Residues 1242 to 1262 (SEKNESDEKQEGNSSGDKEPS) are compositionally biased toward basic and acidic residues. 2 stretches are compositionally biased toward acidic residues: residues 1300–1310 (SESDSESDDFE) and 1334–1349 (SDADLTSSDEDSEYQE). Basic and acidic residues predominate over residues 1371 to 1385 (VPKEKKGKAPKEKPL). Residues 1413–1432 (PRAQAVPKKPAAAKKGSTAK) show a composition bias toward low complexity. The segment covering 1444-1454 (KKKAAPKAPRR) has biased composition (basic residues). The segment covering 1517 to 1532 (SIDLTADSPAAAAPRT) has biased composition (low complexity).

The protein belongs to the type II topoisomerase family. Homodimer. Mg(2+) serves as cofactor. Mn(2+) is required as a cofactor. Requires Ca(2+) as cofactor.

The protein localises to the cytoplasm. It is found in the nucleus. Its subcellular location is the nucleoplasm. The protein resides in the nucleolus. It catalyses the reaction ATP-dependent breakage, passage and rejoining of double-stranded DNA.. Functionally, key decatenating enzyme that alters DNA topology by binding to two double-stranded DNA molecules, generating a double-stranded break in one of the strands, passing the intact strand through the broken strand, and religating the broken strand. May play a role in the regulation of circadian rhythm. This is DNA topoisomerase 2-alpha (TOP2A) from Gallus gallus (Chicken).